The chain runs to 1280 residues: Dynactin subunit 1 (1280 aa).

The segment at 1-26 (MAQSKRHMYNRTPSGSRMSTEASARP) is disordered. A compositionally biased stretch (polar residues) spans 11 to 22 (RTPSGSRMSTEA). The CAP-Gly domain occupies 48–90 (GATLFATGKWVGVILDEAKGKNDGTVQGRKYFTCDEGHGIFVR). The tract at residues 99–223 (DGADTTSPET…SKEEEGLRDQ (125 aa)) is disordered. The span at 102–114 (DTTSPETPDSSAS) shows a compositional bias: polar residues. A phosphothreonine mark is found at threonine 108, threonine 145, threonine 146, and threonine 147. Over residues 129–152 (SKLRGLKPKKAPTARKTTTRRPKP) the composition is skewed to basic residues. Residues 161–205 (AGPSSSLGPSGSASAGELSSSEPSTPAQTPLAAPIIPTPALTSPG) are compositionally biased toward low complexity. Serine 179 is subject to Phosphoserine; by PLK1. Serine 212 carries the phosphoserine; by CDK1 modification. Residues 214 to 223 (SKEEEGLRDQ) are compositionally biased toward basic and acidic residues. Coiled coils occupy residues 214–513 (SKEE…ADYQ) and 942–1048 (LKLE…EGLR). Residues 910–1280 (EYDAERPPSK…LHQLHGRLIS (371 aa)) are interaction with HPS6. Residues 1064–1089 (GEEQQRGGTPGQAPGALPGPGPVKDS) form a disordered region. A coiled-coil region spans residues 1184–1213 (SAQLMEQVAQLKSLSDTIEKLKDEVLKETV).

Belongs to the dynactin 150 kDa subunit family. As to quaternary structure, monomer and homodimer. Subunit of dynactin, a multiprotein complex part of a tripartite complex with dynein and a adapter, such as BICDL1, BICD2 or HOOK3. The dynactin complex is built around ACTR1A/ACTB filament and consists of an actin-related filament composed of a shoulder domain, a pointed end and a barbed end. Its length is defined by its flexible shoulder domain. The soulder is composed of 2 DCTN1 subunits, 4 DCTN2 and 2 DCTN3. DCTN1/p150(glued) binds directly to microtubules and to cytoplasmic dynein. The 4 DCNT2 (via N-terminus) bind the ACTR1A filament and act as molecular rulers to determine the length. The pointed end is important for binding dynein-dynactin cargo adapters. Consists of 4 subunits: ACTR10, DCNT4, DCTN5 and DCTN6. The barbed end is composed of a CAPZA1:CAPZB heterodimers, which binds ACTR1A/ACTB filament and dynactin and stabilizes dynactin. Interacts with the C-terminus of MAPRE1, MAPRE2 and MAPRE3. Interacts (via C-terminus) with SNX6. Interacts with CLN3, DYNAP, ECPAS and FBXL5. Interacts with MISP; this interaction regulates its distribution at the cell cortex. Interacts with CEP131. Interacts with CEP126. Interacts with CLIP1. Interacts with dynein intermediate chain and dynein heavy chain. Interacts with PLK1 (via POLO-box domain). Interacts with TBCB. Binds preferentially to tyrosinated microtubules than to detyrosinated microtubules. Interacts with PARD6A. Interacts with HPS6. Interacts with KIF3A. Interacts with BICD2. Interacts with DST (isoform 9). Interacts with DST (isoform 1). Identified in a complex with MREG and RILP. Interacts with BCCIP (isoform 2/alpha). Interacts with DCDC1. Interacts with AKNA. Interacts with DYNC1I2. Interacts with RUFY3 and RUFY4. Ubiquitinated by a SCF complex containing FBXL5, leading to its degradation by the proteasome. Post-translationally, phosphorylation by SLK at Thr-145, Thr-146 and Thr-147 targets DCTN1 to the centrosome. It is uncertain if SLK phosphorylates all three threonines or one or two of them. PLK1-mediated phosphorylation at Ser-179 is essential for its localization in the nuclear envelope and promotes its dissociation from microtubules during early mitosis and positively regulates nuclear envelope breakdown during prophase. As to expression, ubiquitous with a high level expression observed in the brain (at protein level).

The protein localises to the cytoplasm. It is found in the cytoskeleton. It localises to the microtubule organizing center. Its subcellular location is the centrosome. The protein resides in the centriole. The protein localises to the spindle. It is found in the nucleus envelope. It localises to the cell cortex. Its function is as follows. Part of the dynactin complex that activates the molecular motor dynein for ultra-processive transport along microtubules. Plays a key role in dynein-mediated retrograde transport of vesicles and organelles along microtubules by recruiting and tethering dynein to microtubules. Binds to both dynein and microtubules providing a link between specific cargos, microtubules and dynein. Essential for targeting dynein to microtubule plus ends, recruiting dynein to membranous cargos and enhancing dynein processivity (the ability to move along a microtubule for a long distance without falling off the track). Can also act as a brake to slow the dynein motor during motility along the microtubule. Can regulate microtubule stability by promoting microtubule formation, nucleation and polymerization and by inhibiting microtubule catastrophe in neurons. Inhibits microtubule catastrophe by binding both to microtubules and to tubulin, leading to enhanced microtubule stability along the axon. Plays a role in metaphase spindle orientation. Plays a role in centriole cohesion and subdistal appendage organization and function. Its recruitment to the centriole in a KIF3A-dependent manner is essential for the maintenance of centriole cohesion and the formation of subdistal appendage. Also required for microtubule anchoring at the mother centriole. Plays a role in primary cilia formation. This chain is Dynactin subunit 1 (Dctn1), found in Rattus norvegicus (Rat).